The following is a 185-amino-acid chain: MACPNWRVRLAARIIRGGGVIAYPTEGVFGLGCDPGRKAAIERILQLKGRSISKGFILIAADFVQLQSYLLPLTASTRSRLEVTWPGPVTWLLPARGDVPPWLRGRYDTLAVRVTAHPLAACLCRTLGHALVSTSANRAGRPPAQTTLQVRRSFGSSLDYILPGITGKRAGPSEIRDGRTGQRLR.

The region spanning 5–185 is the YrdC-like domain; sequence NWRVRLAARI…RDGRTGQRLR (181 aa).

It belongs to the SUA5 family. TsaC subfamily.

Its subcellular location is the cytoplasm. It catalyses the reaction L-threonine + hydrogencarbonate + ATP = L-threonylcarbamoyladenylate + diphosphate + H2O. Required for the formation of a threonylcarbamoyl group on adenosine at position 37 (t(6)A37) in tRNAs that read codons beginning with adenine. Catalyzes the conversion of L-threonine, HCO(3)(-)/CO(2) and ATP to give threonylcarbamoyl-AMP (TC-AMP) as the acyladenylate intermediate, with the release of diphosphate. The chain is Threonylcarbamoyl-AMP synthase from Nitrosococcus oceani (strain ATCC 19707 / BCRC 17464 / JCM 30415 / NCIMB 11848 / C-107).